Reading from the N-terminus, the 772-residue chain is Calcium-binding mitochondrial carrier protein (772 aa).

The tract at residues 1–377 is N-terminal domain; it reads MFANRVRQAQ…SISDFEKSTG (377 aa). EF-hand domains lie at 132–165, 166–201, 235–270, and 347–382; these read LDAD…ELMA, KPEA…SLDP, LQQE…VKLR, and ITPL…NINK. Ca(2+)-binding residues include D145, D147, T149, Y151, E156, D179, D181, N183, Y185, and D190. Ca(2+) contacts are provided by D360, N362, D364, K366, and D371. The segment at 378–422 is linker loop domain; that stretch reads LNINKIGGGTNYSDSYPSDSHVTIQNSSTTPSPSTPITNTAAAIA. Positions 432-720 are carrier domain; it reads AQQVLESIEN…KALLPDAEYK (289 aa). Solcar repeat units lie at residues 436-526, 535-616, and 624-712; these read LESI…LRDL, IYFP…MKTI, and LGPM…LQKA. Transmembrane regions (helical) follow at residues 442 to 459, 501 to 520, 545 to 558, 591 to 610, 630 to 647, and 687 to 706; these read FALG…VYPI, GILP…LTVN, GFAG…TNPL, GAGA…FPTY, LLAG…VTPA, and GALA…LVSY. Residues 721–772 form a C-terminal domain region; the sequence is PPTNAPITQKDFDVIRGNTNTVQRVIDMESKFGTLHQTRDNNKSSNGGENKN. The interval 751–772 is disordered; sequence KFGTLHQTRDNNKSSNGGENKN. Residues 763 to 772 are compositionally biased toward low complexity; sequence KSSNGGENKN.

The protein belongs to the mitochondrial carrier (TC 2.A.29) family. In terms of assembly, homodimer (via N-terminus).

It is found in the mitochondrion inner membrane. In terms of biological role, mitochondrial and calcium-binding carrier that catalyzes the calcium-dependent exchange of cytoplasmic glutamate with mitochondrial aspartate across the mitochondrial inner membrane. This is Calcium-binding mitochondrial carrier protein (mcfO) from Dictyostelium discoideum (Social amoeba).